The primary structure comprises 430 residues: 3-phosphoshikimate 1-carboxyvinyltransferase (430 aa).

Residues Lys-23, Ser-24, and Arg-28 each coordinate 3-phosphoshikimate. Lys-23 is a phosphoenolpyruvate binding site. Residues Gly-95 and Arg-123 each coordinate phosphoenolpyruvate. Positions 169, 171, 315, and 342 each coordinate 3-phosphoshikimate. Gln-171 contributes to the phosphoenolpyruvate binding site. The active-site Proton acceptor is Asp-315. Residues Arg-346 and Arg-388 each coordinate phosphoenolpyruvate.

This sequence belongs to the EPSP synthase family. As to quaternary structure, monomer.

The protein localises to the cytoplasm. It catalyses the reaction 3-phosphoshikimate + phosphoenolpyruvate = 5-O-(1-carboxyvinyl)-3-phosphoshikimate + phosphate. It functions in the pathway metabolic intermediate biosynthesis; chorismate biosynthesis; chorismate from D-erythrose 4-phosphate and phosphoenolpyruvate: step 6/7. In terms of biological role, catalyzes the transfer of the enolpyruvyl moiety of phosphoenolpyruvate (PEP) to the 5-hydroxyl of shikimate-3-phosphate (S3P) to produce enolpyruvyl shikimate-3-phosphate and inorganic phosphate. This chain is 3-phosphoshikimate 1-carboxyvinyltransferase, found in Streptococcus pyogenes serotype M6 (strain ATCC BAA-946 / MGAS10394).